A 146-amino-acid polypeptide reads, in one-letter code: Ferredoxin-type protein FwdE (146 aa).

4Fe-4S ferredoxin-type domains are found at residues 90–115 and 116–145; these read IKLFWDENSCIACGSCLGCAALTLDN and FTVGIDEDTCHLCASCIFRCPTNSLKFIKE. [4Fe-4S] cluster-binding residues include cysteine 125, cysteine 128, cysteine 131, and cysteine 135.

Requires [4Fe-4S] cluster as cofactor.

The polypeptide is Ferredoxin-type protein FwdE (fwdE) (Methanocaldococcus jannaschii (strain ATCC 43067 / DSM 2661 / JAL-1 / JCM 10045 / NBRC 100440) (Methanococcus jannaschii)).